The chain runs to 757 residues: 5-methyltetrahydropteroyltriglutamate--homocysteine methyltransferase (757 aa).

Residues R16–K19 and K112 each bind 5-methyltetrahydropteroyltri-L-glutamate. L-homocysteine-binding positions include I433 to S435 and E486. Residues I433–S435 and E486 contribute to the L-methionine site. 5-methyltetrahydropteroyltri-L-glutamate is bound by residues R517–C518 and W563. An L-homocysteine-binding site is contributed by D601. L-methionine is bound at residue D601. E607 is a 5-methyltetrahydropteroyltri-L-glutamate binding site. Zn(2+) contacts are provided by H643, C645, and E667. H696 (proton donor) is an active-site residue. C728 provides a ligand contact to Zn(2+).

This sequence belongs to the vitamin-B12 independent methionine synthase family. Requires Zn(2+) as cofactor.

The enzyme catalyses 5-methyltetrahydropteroyltri-L-glutamate + L-homocysteine = tetrahydropteroyltri-L-glutamate + L-methionine. It functions in the pathway amino-acid biosynthesis; L-methionine biosynthesis via de novo pathway; L-methionine from L-homocysteine (MetE route): step 1/1. In terms of biological role, catalyzes the transfer of a methyl group from 5-methyltetrahydrofolate to homocysteine resulting in methionine formation. In Pasteurella multocida (strain Pm70), this protein is 5-methyltetrahydropteroyltriglutamate--homocysteine methyltransferase.